The sequence spans 160 residues: MPDRRGDRGRHQARKRAVDLLFEAEARGLTAEAVADSRAALAEDQDDVAPLNPYTVLVARGVTEHAAHIDDLISAHLQGWTLERLPAVDRAILRVAVWELLHAEDVPEPVAVDEAVELAKELSTDESPGFVNGVLGQVMLVTPQIRAASQAVRGTGPAEG.

Belongs to the NusB family.

Functionally, involved in transcription antitermination. Required for transcription of ribosomal RNA (rRNA) genes. Binds specifically to the boxA antiterminator sequence of the ribosomal RNA (rrn) operons. The protein is Transcription antitermination protein NusB of Mycolicibacterium smegmatis (strain ATCC 700084 / mc(2)155) (Mycobacterium smegmatis).